The following is a 397-amino-acid chain: G2/mitotic-specific cyclin-B1 (397 aa).

This sequence belongs to the cyclin family. Cyclin AB subfamily. Interacts with the cdc2 protein kinase to form a serine/threonine kinase holoenzyme complex also known as maturation promoting factor (MPF). The cyclin subunit imparts substrate specificity to the complex. When not in a complex with cdc2, interacts with spdya. Interacts with nap1l1. Interacts with nanos1.

It localises to the cytoplasm. The protein resides in the cytoskeleton. Its subcellular location is the microtubule organizing center. The protein localises to the centrosome. It is found in the nucleus. Its function is as follows. Essential for the control of the cell cycle at the G2/M (mitosis) transition. The protein is G2/mitotic-specific cyclin-B1 (ccnb1) of Xenopus laevis (African clawed frog).